The chain runs to 285 residues: Bifunctional protein FolD (285 aa).

Residues 169–171 (GRS), Ser194, and Ile235 each bind NADP(+).

Belongs to the tetrahydrofolate dehydrogenase/cyclohydrolase family. Homodimer.

It carries out the reaction (6R)-5,10-methylene-5,6,7,8-tetrahydrofolate + NADP(+) = (6R)-5,10-methenyltetrahydrofolate + NADPH. The enzyme catalyses (6R)-5,10-methenyltetrahydrofolate + H2O = (6R)-10-formyltetrahydrofolate + H(+). It functions in the pathway one-carbon metabolism; tetrahydrofolate interconversion. In terms of biological role, catalyzes the oxidation of 5,10-methylenetetrahydrofolate to 5,10-methenyltetrahydrofolate and then the hydrolysis of 5,10-methenyltetrahydrofolate to 10-formyltetrahydrofolate. This chain is Bifunctional protein FolD, found in Microcystis aeruginosa (strain NIES-843 / IAM M-2473).